A 319-amino-acid polypeptide reads, in one-letter code: Ribose-phosphate pyrophosphokinase (319 aa).

Residues 40 to 42 (DGE) and 99 to 100 (RQ) each bind ATP. Mg(2+) contacts are provided by histidine 134 and aspartate 174. Lysine 198 is a catalytic residue. D-ribose 5-phosphate is bound by residues arginine 200, aspartate 224, and 228 to 232 (DTAGT).

Belongs to the ribose-phosphate pyrophosphokinase family. Class I subfamily. As to quaternary structure, homohexamer. Mg(2+) is required as a cofactor.

Its subcellular location is the cytoplasm. It carries out the reaction D-ribose 5-phosphate + ATP = 5-phospho-alpha-D-ribose 1-diphosphate + AMP + H(+). The protein operates within metabolic intermediate biosynthesis; 5-phospho-alpha-D-ribose 1-diphosphate biosynthesis; 5-phospho-alpha-D-ribose 1-diphosphate from D-ribose 5-phosphate (route I): step 1/1. In terms of biological role, involved in the biosynthesis of the central metabolite phospho-alpha-D-ribosyl-1-pyrophosphate (PRPP) via the transfer of pyrophosphoryl group from ATP to 1-hydroxyl of ribose-5-phosphate (Rib-5-P). This chain is Ribose-phosphate pyrophosphokinase, found in Xanthomonas campestris pv. campestris (strain ATCC 33913 / DSM 3586 / NCPPB 528 / LMG 568 / P 25).